The following is a 249-amino-acid chain: Aquaporin (249 aa).

The Cytoplasmic segment spans residues 1-11 (MTRKWIKKLQS). A helical transmembrane segment spans residues 12–32 (YIGEFFASFIFGFAVYTSIIG). The Extracellular segment spans residues 33 to 39 (SAQTGQS). A helical transmembrane segment spans residues 40-60 (AGPIIVALTIALSGVAIIYSF). Residues 61–83 (CDITVAHFNPAITFSAMCFRRLP) are Cytoplasmic-facing. An NPA motif is present at residues 69 to 71 (NPA). A helical membrane pass occupies residues 84–104 (FFGGIFIIIFQVAGFIIAGLA). At 105–133 (SVAVLPGKYKNKLEIARPKRVADNVSRGR) the chain is on the extracellular side. The helical transmembrane segment at 134–154 (IFGTEFFLTAILVYVAFAVGV) threads the bilayer. Over 155-179 (NPYTPPKDEHGDQLDPDEGLTEGRK) the chain is Cytoplasmic. Residues 180–200 (ITAPLAIGFTLGFCALLGIAS) form a helical membrane-spanning segment. The Extracellular portion of the chain corresponds to 201 to 223 (SGGAFNPGIVLSPMILTGTWDFW). An NPG motif is present at residues 206-208 (NPG). Residues 224–246 (WVYLLGQFSGGLLGGGLQRFLLY) traverse the membrane as a helical segment. Over 247 to 249 (KIF) the chain is Cytoplasmic.

This sequence belongs to the MIP/aquaporin (TC 1.A.8) family.

The protein localises to the cell membrane. Its function is as follows. Water channel required to facilitate the transport of water across membranes. Involved in osmotolerance. The chain is Aquaporin (AQP) from Vairimorpha ceranae (strain BRL01) (Microsporidian parasite).